The sequence spans 238 residues: Large ribosomal subunit protein uL2 (238 aa).

Positions His200–Lys238 are disordered. Residues Gln206 to Arg216 are compositionally biased toward polar residues. A compositionally biased stretch (basic residues) spans Lys223–Lys238.

It belongs to the universal ribosomal protein uL2 family. As to quaternary structure, part of the 50S ribosomal subunit. Forms a bridge to the 30S subunit in the 70S ribosome.

One of the primary rRNA binding proteins. Required for association of the 30S and 50S subunits to form the 70S ribosome, for tRNA binding and peptide bond formation. It has been suggested to have peptidyltransferase activity; this is somewhat controversial. Makes several contacts with the 16S rRNA in the 70S ribosome. This is Large ribosomal subunit protein uL2 from Saccharolobus islandicus (strain Y.N.15.51 / Yellowstone #2) (Sulfolobus islandicus).